An 839-amino-acid polypeptide reads, in one-letter code: Taste receptor type 1 member 2 (839 aa).

The N-terminal stretch at 1 to 19 (MGPRATTICSLFFLLWVLA) is a signal peptide. Over 20–566 (EPAENSDFYL…AFLEWHEAPT (547 aa)) the chain is Extracellular. N-linked (GlcNAc...) asparagine glycans are attached at residues Asn84, Asn248, Asn292, Asn312, Asn368, Asn428, Asn487, and Asn527. A helical transmembrane segment spans residues 567–587 (IAVALLAALGFLSTLAILVIF). The Cytoplasmic segment spans residues 588–602 (WRHFQTPMVRSAGGP). The chain crosses the membrane as a helical span at residues 603-623 (MCFLMLTLLLVAYMVVPVYVG). Over 624–635 (PPKVSTCLCRQA) the chain is Extracellular. The helical transmembrane segment at 636-656 (LFPLCFTICISCIAVRSFQII) threads the bilayer. The Cytoplasmic portion of the chain corresponds to 657-681 (CAFKMASRFPRAYSYWVRYQGPYVS). Residues 682 to 702 (MAFITVLKMVIVVIGMLATGL) form a helical membrane-spanning segment. Topologically, residues 703-727 (NPTTRTDPDDPKIMIVSCNPNYRNS) are extracellular. The chain crosses the membrane as a helical span at residues 728–748 (LLFNTSLDLLLSVVGFSFANM). At 749-760 (GKELPTNYNEAK) the chain is on the cytoplasmic side. A helical membrane pass occupies residues 761-781 (FITLSMTFYFTSSISLCTFMS). Residues 782–784 (AYS) lie on the Extracellular side of the membrane. The helical transmembrane segment at 785–805 (GVLVTIVDLLVTVLNLLAISL) threads the bilayer. The Cytoplasmic segment spans residues 806–839 (GYFGPKCYMILFYPERNTPAYFNSVIQGYTMTRD).

This sequence belongs to the G-protein coupled receptor 3 family. TAS1R subfamily. Forms heterodimers with TAS1R3.

Its subcellular location is the cell membrane. Functionally, putative taste receptor. TAS1R2/TAS1R3 recognizes diverse natural and synthetic sweeteners. This is Taste receptor type 1 member 2 (TAS1R2) from Pongo pygmaeus (Bornean orangutan).